We begin with the raw amino-acid sequence, 65 residues long: uncharacterized protein (65 aa).

It localises to the plastid. The protein localises to the chloroplast. This is an uncharacterized protein from Mesostigma viride (Green alga).